A 283-amino-acid chain; its full sequence is Elongation factor Ts (283 aa).

The interval 79–82 (TDFV) is involved in Mg(2+) ion dislocation from EF-Tu.

It belongs to the EF-Ts family.

The protein localises to the cytoplasm. Its function is as follows. Associates with the EF-Tu.GDP complex and induces the exchange of GDP to GTP. It remains bound to the aminoacyl-tRNA.EF-Tu.GTP complex up to the GTP hydrolysis stage on the ribosome. The protein is Elongation factor Ts of Shewanella amazonensis (strain ATCC BAA-1098 / SB2B).